A 525-amino-acid polypeptide reads, in one-letter code: MDVSYYDGPKDEVAEAMLKSAVTAMRLGQYEDGKGRLEEIMEFGTSNFQLLGTIYMYYGRVCRHLNHDAKALEFFEHELNMFKLIFNYPEACDSTRRIVEQALKMGKFPKARRFAEDLIDYTSNKKNGEKYIGQARILFASVCLEGCERDVESNQDEKKKLLSICAEQIAAVKLFNENNTEGAVSETKIMLLEAKCLSLDEKYEESRRKYQECIDFAIKTDQFEAVHIAYYDKALYAETDLLFFIIRDLRSALFYATKFGKERDVVKYKSKLSEEMLRNGEFHEAYLYGLEALVSIRKLGLNEYIGDVLLTIAKCLIALGKRRQAAYFIILGSVLTINQNSFKLFYEQIDVAMNQERSETATDQDVCLAIDSSPDPTSSNDMINKFVVELEHATNVETWEMIVNGIIDDQKKPVAIEKKENEEPVDMMDLIFSMSSRMDDQRTELPAARFIPPRPVSSASKKTTKSHRILPGLRANWTKVQSMKFDGHTMNRILKRSKKSKSSLDSTNSMQGDDTRSDDVTMTSK.

A GoLoco domain is found at 424–445 (PVDMMDLIFSMSSRMDDQRTEL). The disordered stretch occupies residues 488-525 (HTMNRILKRSKKSKSSLDSTNSMQGDDTRSDDVTMTSK).

Interacts with gpr-1, lin-5 and GDP-bound goa-1.

It is found in the cytoplasm. Its subcellular location is the cell cortex. The protein localises to the cytoskeleton. It localises to the spindle. In terms of biological role, in the 1-cell embryo, probably together with gpr-2, controls nuclear rotation and spindle elongation during mitosis. Complex of gpr-1 and gpr-2, in association with lin-5, activates G-protein signaling to affect mitotic spindle force. Polarity determinants (par genes) may regulate lin-5/gpr-1/gpr-2/goa-1 locally to create the asymmetric forces that drive spindle movement. This is G-protein regulator 1 (gpr-1) from Caenorhabditis elegans.